The following is a 215-amino-acid chain: Phosphatidylserine decarboxylase proenzyme (215 aa).

S185 acts as the Schiff-base intermediate with substrate; via pyruvic acid in catalysis. The residue at position 185 (S185) is a Pyruvic acid (Ser); by autocatalysis.

Belongs to the phosphatidylserine decarboxylase family. PSD-A subfamily. Heterodimer of a large membrane-associated beta subunit and a small pyruvoyl-containing alpha subunit. The cofactor is pyruvate. In terms of processing, is synthesized initially as an inactive proenzyme. Formation of the active enzyme involves a self-maturation process in which the active site pyruvoyl group is generated from an internal serine residue via an autocatalytic post-translational modification. Two non-identical subunits are generated from the proenzyme in this reaction, and the pyruvate is formed at the N-terminus of the alpha chain, which is derived from the carboxyl end of the proenzyme. The post-translation cleavage follows an unusual pathway, termed non-hydrolytic serinolysis, in which the side chain hydroxyl group of the serine supplies its oxygen atom to form the C-terminus of the beta chain, while the remainder of the serine residue undergoes an oxidative deamination to produce ammonia and the pyruvoyl prosthetic group on the alpha chain.

The protein resides in the cell membrane. The catalysed reaction is a 1,2-diacyl-sn-glycero-3-phospho-L-serine + H(+) = a 1,2-diacyl-sn-glycero-3-phosphoethanolamine + CO2. The protein operates within phospholipid metabolism; phosphatidylethanolamine biosynthesis; phosphatidylethanolamine from CDP-diacylglycerol: step 2/2. Its function is as follows. Catalyzes the formation of phosphatidylethanolamine (PtdEtn) from phosphatidylserine (PtdSer). The chain is Phosphatidylserine decarboxylase proenzyme from Streptomyces avermitilis (strain ATCC 31267 / DSM 46492 / JCM 5070 / NBRC 14893 / NCIMB 12804 / NRRL 8165 / MA-4680).